The chain runs to 1212 residues: DNA-directed RNA polymerase subunit beta' (1212 aa).

Cysteine 60, cysteine 62, cysteine 75, and cysteine 78 together coordinate Zn(2+). Residues aspartate 450, aspartate 452, and aspartate 454 each contribute to the Mg(2+) site. Residues cysteine 819, cysteine 893, cysteine 900, and cysteine 903 each coordinate Zn(2+).

The protein belongs to the RNA polymerase beta' chain family. The RNAP catalytic core consists of 2 alpha, 1 beta, 1 beta' and 1 omega subunit. When a sigma factor is associated with the core the holoenzyme is formed, which can initiate transcription. It depends on Mg(2+) as a cofactor. The cofactor is Zn(2+).

The enzyme catalyses RNA(n) + a ribonucleoside 5'-triphosphate = RNA(n+1) + diphosphate. Functionally, DNA-dependent RNA polymerase catalyzes the transcription of DNA into RNA using the four ribonucleoside triphosphates as substrates. The sequence is that of DNA-directed RNA polymerase subunit beta' from Streptococcus thermophilus (strain ATCC BAA-491 / LMD-9).